We begin with the raw amino-acid sequence, 258 residues long: 6-carboxyhexanoate--CoA ligase (258 aa).

It belongs to the BioW family. Homodimer. The cofactor is Mg(2+).

It catalyses the reaction heptanedioate + ATP + CoA = 6-carboxyhexanoyl-CoA + AMP + diphosphate. The protein operates within metabolic intermediate metabolism; pimeloyl-CoA biosynthesis; pimeloyl-CoA from pimelate: step 1/1. Its function is as follows. Catalyzes the transformation of pimelate into pimeloyl-CoA with concomitant hydrolysis of ATP to AMP. This is 6-carboxyhexanoate--CoA ligase from Bacillus subtilis (strain BSn5).